The primary structure comprises 501 residues: Putative matrix metalloproteinase (501 aa).

A signal peptide spans 1–26; sequence MMPQYERKQIIIHISCVIICVVVTLT. N-linked (GlcNAc...) asparagine; by host glycans are attached at residues N48, N58, N61, N94, N116, and N163. H179 lines the Zn(2+) pocket. E180 is a catalytic residue. Positions 183 and 189 each coordinate Zn(2+). N-linked (GlcNAc...) asparagine; by host glycans are attached at residues N192, N267, N280, and N291. One copy of the Hemopexin repeat lies at 311–356; sequence TGHIDTISVIRGELYIFVDEYHWRFRSNGLLYSGYPLKTTHSWSVP. 2 N-linked (GlcNAc...) asparagine; by host glycosylation sites follow: N379 and N493.

This sequence belongs to the peptidase M10A family. Requires Zn(2+) as cofactor.

This chain is Putative matrix metalloproteinase, found in Trichoplusia ni ascovirus 2c (TnAV-2c).